A 556-amino-acid polypeptide reads, in one-letter code: Arginine--tRNA ligase (556 aa).

The 'HIGH' region signature appears at 117 to 127 (PNVAKQMHVGH).

This sequence belongs to the class-I aminoacyl-tRNA synthetase family. As to quaternary structure, monomer.

The protein localises to the cytoplasm. It catalyses the reaction tRNA(Arg) + L-arginine + ATP = L-arginyl-tRNA(Arg) + AMP + diphosphate. This is Arginine--tRNA ligase from Cutibacterium acnes (strain DSM 16379 / KPA171202) (Propionibacterium acnes).